Reading from the N-terminus, the 512-residue chain is GMP synthase [glutamine-hydrolyzing] (512 aa).

The region spanning 7–197 (TILILDFGGQ…LFEVCDCSAD (191 aa)) is the Glutamine amidotransferase type-1 domain. C84 acts as the Nucleophile in catalysis. Catalysis depends on residues H171 and E173. Residues 198–387 (WTMDSLIEQT…LGIPDEILYR (190 aa)) enclose the GMPS ATP-PPase domain. 225-231 (SGGVDSA) lines the ATP pocket.

As to quaternary structure, homodimer.

The enzyme catalyses XMP + L-glutamine + ATP + H2O = GMP + L-glutamate + AMP + diphosphate + 2 H(+). Its pathway is purine metabolism; GMP biosynthesis; GMP from XMP (L-Gln route): step 1/1. Catalyzes the synthesis of GMP from XMP. This Caldanaerobacter subterraneus subsp. tengcongensis (strain DSM 15242 / JCM 11007 / NBRC 100824 / MB4) (Thermoanaerobacter tengcongensis) protein is GMP synthase [glutamine-hydrolyzing].